The chain runs to 91 residues: Large ribosomal subunit protein bL31B (91 aa).

Belongs to the bacterial ribosomal protein bL31 family. Type B subfamily. In terms of assembly, part of the 50S ribosomal subunit.

This is Large ribosomal subunit protein bL31B from Neisseria meningitidis serogroup C (strain 053442).